We begin with the raw amino-acid sequence, 43 residues long: Myotoxin-1 (43 aa).

Disulfide bonds link cysteine 4-cysteine 36, cysteine 11-cysteine 30, and cysteine 18-cysteine 37.

Belongs to the crotamine-myotoxin family. In terms of assembly, monomer. In terms of tissue distribution, expressed by the venom gland.

It is found in the secreted. Functionally, cationic peptide that possesses multiple functions. It acts as a cell-penetrating peptide (CPP), and as a potent voltage-gated potassium channel (Kv) inhibitor. It exhibits antimicrobial activities, hind limb paralysis, and severe muscle necrosis by a non-enzymatic mechanism. The chain is Myotoxin-1 from Crotalus concolor (Midget faded rattlesnake).